The sequence spans 171 residues: Dual specificity protein phosphatase OPG106 (171 aa).

The Tyrosine-protein phosphatase domain maps to 23-171 (SPTIMTRVTN…IIEKYVIDKN (149 aa)). Cys-110 serves as the catalytic Phosphocysteine intermediate.

The protein belongs to the protein-tyrosine phosphatase family. Non-receptor class dual specificity subfamily. Homodimer.

The protein resides in the virion. The protein localises to the host cytoplasm. The enzyme catalyses O-phospho-L-tyrosyl-[protein] + H2O = L-tyrosyl-[protein] + phosphate. It carries out the reaction O-phospho-L-seryl-[protein] + H2O = L-seryl-[protein] + phosphate. Functionally, serine/tyrosine phosphatase which down-regulates cellular antiviral response by dephosphorylating activated host STAT1 and blocking interferon (IFN)-stimulated innate immune responses. Dephosphorylates the OPG144 protein. The protein is Dual specificity protein phosphatase OPG106 (OPG106) of Homo sapiens (Human).